The chain runs to 417 residues: MLEQMGIAAKAASWQLALLSSREKNQVLEKIADYLEAQTDDILRANAEDLAEARANGLSEAMLDRLALTPARLSGIANDVRQVCNLADPVGQVIDGGLLDSGLRIERRRVPLGVIGVIYEARPNVTVDVASLCLKTGNAAILRGGKETWRTNAATVKVIQQALQECGLPAAAVQAIDSPDRALVGEMLKMDKYIDMLIPRGGAGLHKLCREQSTIPVITGGIGVCHIFVDETAEIPPALKIIVNAKTQRPSTCNTVETLLVHRNIADTFLPALSKQMAESGVTLHAAPSALPALQNGPAKVEPVKAEQYDDEYLSLDLNVKVVADMDEAIAHIREHGTQHSDAILTRTLRNANRFINEVDSSAVYVNASTRFTDGGQFGLGAEVAVSTQKLHARGPMGLEALTTYKWIGFGDDTIRA.

This sequence belongs to the gamma-glutamyl phosphate reductase family.

It is found in the cytoplasm. The catalysed reaction is L-glutamate 5-semialdehyde + phosphate + NADP(+) = L-glutamyl 5-phosphate + NADPH + H(+). The protein operates within amino-acid biosynthesis; L-proline biosynthesis; L-glutamate 5-semialdehyde from L-glutamate: step 2/2. Catalyzes the NADPH-dependent reduction of L-glutamate 5-phosphate into L-glutamate 5-semialdehyde and phosphate. The product spontaneously undergoes cyclization to form 1-pyrroline-5-carboxylate. This is Gamma-glutamyl phosphate reductase from Klebsiella pneumoniae subsp. pneumoniae (strain ATCC 700721 / MGH 78578).